The following is a 225-amino-acid chain: uncharacterized protein (225 aa).

The chain crosses the membrane as a helical span at residues 181–203 (INIFVVFMFIIYLLFYIISSTVF).

It is found in the cell membrane. This is an uncharacterized protein from Bacillus anthracis.